The sequence spans 188 residues: Probable manganese efflux pump MntP (188 aa).

A run of 5 helical transmembrane segments spans residues 3 to 23 (ITAT…ASIG), 66 to 86 (LEWN…RMII), 106 to 128 (WLLV…GLAF), 143 to 163 (ATLI…SIIG), and 168 to 188 (ILGG…HFHG).

The protein belongs to the MntP (TC 9.B.29) family.

Its subcellular location is the cell inner membrane. Its function is as follows. Probably functions as a manganese efflux pump. This is Probable manganese efflux pump MntP from Shigella flexneri serotype 5b (strain 8401).